Consider the following 728-residue polypeptide: Bacteriophytochrome (728 aa).

C12 is an a tetrapyrrole binding site. The chromophore binding domain stretch occupies residues 17–495 (IHVPGAIQPH…RLDLMELCLN (479 aa)). Positions 139 to 303 (DTASLLSNVT…IFSQVCSAIV (165 aa)) constitute a GAF domain. Positions 510–721 (VLGHDLRNPL…TFCLRLPVRQ (212 aa)) constitute a Histidine kinase domain. H513 bears the Phosphohistidine; by autocatalysis mark.

The protein in the N-terminal section; belongs to the phytochrome family. Post-translationally, contains one covalently linked tetrapyrrole chromophore.

The enzyme catalyses ATP + protein L-histidine = ADP + protein N-phospho-L-histidine.. In terms of biological role, photoreceptor which exists in two forms that are reversibly interconvertible by light: the R form that absorbs maximally in the red region of the spectrum and the FR form that absorbs maximally in the far-red region. This is Bacteriophytochrome (bphP) from Pseudomonas aeruginosa (strain ATCC 15692 / DSM 22644 / CIP 104116 / JCM 14847 / LMG 12228 / 1C / PRS 101 / PAO1).